Here is a 235-residue protein sequence, read N- to C-terminus: Germin-like protein 1-4 (235 aa).

Positions 1 to 27 (MAAKLPTVVLLASFAAVILSLAAPLLA) are cleaved as a signal peptide. Cys-37 and Cys-55 are disulfide-bonded. N-linked (GlcNAc...) asparagine glycosylation is present at Asn-60. A Cupin type-1 domain is found at 69 to 226 (PGLGKPADVY…AFQVDGGVVE (158 aa)). Residues His-120, His-122, Glu-127, and His-171 each coordinate Mn(2+).

This sequence belongs to the germin family. As to quaternary structure, oligomer (believed to be a pentamer but probably hexamer).

The protein localises to the secreted. It is found in the extracellular space. It localises to the apoplast. Functionally, may play a role in plant defense. Probably has no oxalate oxidase activity even if the active site is conserved. This is Germin-like protein 1-4 from Oryza sativa subsp. japonica (Rice).